A 334-amino-acid chain; its full sequence is Biotin synthase (334 aa).

Residues glutamine 54 to arginine 281 form the Radical SAM core domain. [4Fe-4S] cluster-binding residues include cysteine 69, cysteine 73, and cysteine 76. [2Fe-2S] cluster-binding residues include cysteine 113, cysteine 144, cysteine 204, and arginine 276.

This sequence belongs to the radical SAM superfamily. Biotin synthase family. Homodimer. [4Fe-4S] cluster is required as a cofactor. The cofactor is [2Fe-2S] cluster.

The catalysed reaction is (4R,5S)-dethiobiotin + (sulfur carrier)-SH + 2 reduced [2Fe-2S]-[ferredoxin] + 2 S-adenosyl-L-methionine = (sulfur carrier)-H + biotin + 2 5'-deoxyadenosine + 2 L-methionine + 2 oxidized [2Fe-2S]-[ferredoxin]. It participates in cofactor biosynthesis; biotin biosynthesis; biotin from 7,8-diaminononanoate: step 2/2. Its function is as follows. Catalyzes the conversion of dethiobiotin (DTB) to biotin by the insertion of a sulfur atom into dethiobiotin via a radical-based mechanism. The chain is Biotin synthase from Haemophilus ducreyi (strain 35000HP / ATCC 700724).